Here is a 480-residue protein sequence, read N- to C-terminus: NADH-quinone oxidoreductase subunit N (480 aa).

A run of 14 helical transmembrane segments spans residues leucine 11–alanine 31, leucine 38–leucine 58, phenylalanine 76–alanine 96, alanine 105–methionine 125, leucine 128–phenylalanine 148, leucine 163–valine 183, alanine 195–leucine 215, alanine 240–leucine 260, tryptophan 270–leucine 290, methionine 298–glutamine 318, valine 329–leucine 349, alanine 368–phenylalanine 388, valine 407–isoleucine 427, and valine 453–leucine 473.

It belongs to the complex I subunit 2 family. NDH-1 is composed of 14 different subunits. Subunits NuoA, H, J, K, L, M, N constitute the membrane sector of the complex.

The protein localises to the cell membrane. The catalysed reaction is a quinone + NADH + 5 H(+)(in) = a quinol + NAD(+) + 4 H(+)(out). NDH-1 shuttles electrons from NADH, via FMN and iron-sulfur (Fe-S) centers, to quinones in the respiratory chain. The immediate electron acceptor for the enzyme in this species is believed to be a menaquinone. Couples the redox reaction to proton translocation (for every two electrons transferred, four hydrogen ions are translocated across the cytoplasmic membrane), and thus conserves the redox energy in a proton gradient. In Rubrobacter xylanophilus (strain DSM 9941 / JCM 11954 / NBRC 16129 / PRD-1), this protein is NADH-quinone oxidoreductase subunit N.